Reading from the N-terminus, the 553-residue chain is CTP synthase (553 aa).

Residues 1 to 270 (MTKFVFVTGG…DRIICEELRI (270 aa)) form an amidoligase domain region. Serine 13 provides a ligand contact to CTP. Position 13 (serine 13) interacts with UTP. ATP is bound by residues 14 to 19 (SLGKGI) and aspartate 71. Mg(2+)-binding residues include aspartate 71 and glutamate 144. CTP is bound by residues 151-153 (DIE), 191-196 (KTKPTQ), and lysine 227. UTP contacts are provided by residues 191 to 196 (KTKPTQ) and lysine 227. A Glutamine amidotransferase type-1 domain is found at 295–547 (TIGMVGKYVD…VEAALAHQQN (253 aa)). Glycine 356 is an L-glutamine binding site. Cysteine 383 acts as the Nucleophile; for glutamine hydrolysis in catalysis. Residues 384-387 (LGMQ), glutamate 407, and arginine 473 each bind L-glutamine. Active-site residues include histidine 520 and glutamate 522.

The protein belongs to the CTP synthase family. Homotetramer.

The catalysed reaction is UTP + L-glutamine + ATP + H2O = CTP + L-glutamate + ADP + phosphate + 2 H(+). It catalyses the reaction L-glutamine + H2O = L-glutamate + NH4(+). The enzyme catalyses UTP + NH4(+) + ATP = CTP + ADP + phosphate + 2 H(+). It participates in pyrimidine metabolism; CTP biosynthesis via de novo pathway; CTP from UDP: step 2/2. Allosterically activated by GTP, when glutamine is the substrate; GTP has no effect on the reaction when ammonia is the substrate. The allosteric effector GTP functions by stabilizing the protein conformation that binds the tetrahedral intermediate(s) formed during glutamine hydrolysis. Inhibited by the product CTP, via allosteric rather than competitive inhibition. In terms of biological role, catalyzes the ATP-dependent amination of UTP to CTP with either L-glutamine or ammonia as the source of nitrogen. Regulates intracellular CTP levels through interactions with the four ribonucleotide triphosphates. The protein is CTP synthase of Ralstonia pickettii (strain 12J).